Reading from the N-terminus, the 522-residue chain is MRIWFKKVPDGITSSVILSEDHLVDDLKDAIARKFPIRISQYYDAPELSIRVVAPPNASSELQSRELSPNESILFVMETYYPHGQDFNDALLVASPDTSVALRYRSSQLSSSTFESTPPVFSEYPPNIIPTPANETVPRIKQPSIALDSLESPVSAPSRHQSTYSYKGGPLNYNLRNASRTRSHQTLPSSNVNKTGVLLLPRSSRQQTLASRPSLPDLTSADKSQPSDEAESITRKNSIGMSTRSDESTAEKLAKAEVATPTNSRSISHSSLYTKQSGTAGVLPAVNADIDAANRMNPDISSQFPIADNKDPLNADTQAHLGFPSNQIDGIVGTSPVNVLTSPGIGAKAPFASLLEGVIPPINVLIVEDNIINQKILETFMKKRNISSEVAKDGLEALEKWKKKSFHLILMDIQLPTMSGIEVTQEIRRLERLNAIGVGAPKLTQPIPEKDQLNENKFQSPVIIVALTASSLMADRNEALAAGCNDFLTKPVSLVWLEKKITEWGCMQALIDWNGWCRFRGR.

The interval 148–274 is disordered; sequence DSLESPVSAP…RSISHSSLYT (127 aa). The segment covering 174–194 has biased composition (polar residues); that stretch reads NLRNASRTRSHQTLPSSNVNK. Positions 244 to 255 are enriched in basic and acidic residues; sequence RSDESTAEKLAK. Over residues 260–274 the composition is skewed to polar residues; it reads TPTNSRSISHSSLYT. The 143-residue stretch at 363 to 505 folds into the Response regulatory domain; that stretch reads NVLIVEDNII…WLEKKITEWG (143 aa). Aspartate 412 carries the post-translational modification 4-aspartylphosphate.

It is found in the cytoplasm. Response regulator that coordinately controls the stress activated wak1-wis1-sty1 MAP kinase pathway and fission yeast cell cycle. This Schizosaccharomyces pombe (strain 972 / ATCC 24843) (Fission yeast) protein is Response regulator mcs4 (mcs4).